Consider the following 312-residue polypeptide: Malate dehydrogenase (312 aa).

NAD(+) contacts are provided by residues Gly7–Gly13 and Asp34. Substrate contacts are provided by Arg81 and Arg87. NAD(+) is bound by residues Asn94 and Ile117–Asn119. Residues Asn119 and Arg153 each coordinate substrate. Catalysis depends on His177, which acts as the Proton acceptor. An NAD(+)-binding site is contributed by Met227.

It belongs to the LDH/MDH superfamily. MDH type 1 family. Homodimer.

It carries out the reaction (S)-malate + NAD(+) = oxaloacetate + NADH + H(+). Catalyzes the reversible oxidation of malate to oxaloacetate. The chain is Malate dehydrogenase from Edwardsiella ictaluri (strain 93-146).